Consider the following 396-residue polypeptide: Cell division protein FtsZ 1 (396 aa).

The segment at 1-38 is disordered; that stretch reads MDSIVQDAIDEAEESEDSASEPADVAGGGGDTVPTGTM. The segment covering 8-19 has biased composition (acidic residues); sequence AIDEAEESEDSA. GTP contacts are provided by residues 61-65, 148-150, glutamate 179, arginine 183, and aspartate 226; these read GAGSN and GTG. The interval 358–396 is disordered; it reads QIYGRNEAAEGDGPAQESTPEPEPEPQAGSEIEDIDYVE.

This sequence belongs to the FtsZ family. In terms of assembly, homodimer. Polymerizes to form a dynamic ring structure in a strictly GTP-dependent manner. Interacts directly with several other division proteins.

It localises to the cytoplasm. Essential cell division protein that forms a contractile ring structure (Z ring) at the future cell division site. The regulation of the ring assembly controls the timing and the location of cell division. One of the functions of the FtsZ ring is to recruit other cell division proteins to the septum to produce a new cell wall between the dividing cells. Binds GTP and shows GTPase activity. The sequence is that of Cell division protein FtsZ 1 from Halobacterium salinarum (strain ATCC 29341 / DSM 671 / R1).